Here is an 892-residue protein sequence, read N- to C-terminus: NACHT, LRR and PYD domains-containing protein 6 (892 aa).

In terms of domain architecture, Pyrin spans 1 to 103 (MDQPEAPCSS…AAQLQERRLQ (103 aa)). Positions 158–181 (APEEAMGPAEEPEPGRARRSDTHT) are disordered. A compositionally biased stretch (basic and acidic residues) spans 170–181 (EPGRARRSDTHT). The 318-residue stretch at 196–513 (LTVVLQGPAG…EFLAALSYLL (318 aa)) folds into the NACHT domain. 202–209 (GPAGIGKT) is a binding site for ATP. The disordered stretch occupies residues 352-356 (KDKKK). The stretch at 462-487 (EKELEQLELRGSKVQTLFLSKKELPG) is one LRR 1 repeat. A disordered region spans residues 590-614 (APEVTEGAKGLEDTEEPEEEEEGEE). Positions 602 to 614 (DTEEPEEEEEGEE) are enriched in acidic residues. LRR repeat units lie at residues 727–747 (LCHLSSLTLSHCKLPDAVCRD), 755–778 (APALTELGLLHNRLSEAGLRMLSE), 811–834 (SPALTTLDLSGCQLPAPMVTYLCA), and 845–868 (TLSLASVELSEQSLQELQAVKRAK).

This sequence belongs to the NLRP family. In terms of assembly, homomultimer; forms the NLRP6 inflammasome polymeric complex, a filament composed of homopolymers in response to pathogens and other damage-associated signals. The core of NLRP6 inflammasomes consists of a signal sensor component (NLRP6), an adapter (PYCARD/ASC), which recruits effector pro-inflammatory caspases (CASP1 and CASP4). Interacts (via pyrin domain) with PYCARD/ASC (via pyrin domain); interaction takes place following NLRP6 activation and formation of liquid-liquid phase separation (LLPS), initiating nucleation which greatly enhances further addition of soluble PYCARD/ASC molecules to the speck in a prion-like polymerization process. Clustered PYCARD/ASC nucleates the formation of CASP1 (or possibly CASP4) filaments through the interaction of their respective CARD domains, acting as a platform for CASP1 polymerization. CASP1 filament formation increases local enzyme concentration, resulting in trans-autocleavage and activation. Active CASP1 then processes IL1B and IL18 precursors, leading to the release of mature cytokines in the extracellular milieu and inflammatory response. Interacts with DHX15. In terms of processing, polyubiquitinated with 'Lys-63'-linked chains, promoting the interaction with PYCARD/ASC and formation of the NLRP6 inflammasome. Deubiquitination by CYLD decreases the interaction with PYCARD/ASC. As to expression, expressed in peripheral blood leukocytes, predominantly in granulocytes and, at lower levels, in CD4(+) and CD8(+) T-cells. Expressed in colonic myofibroblasts (at protein level).

It is found in the cytoplasm. It localises to the cytosol. The protein localises to the inflammasome. The protein resides in the cell membrane. Its subcellular location is the nucleus membrane. In terms of biological role, acts as the sensor component of the NLRP6 inflammasome, which mediates inflammasome activation in response to various pathogen-associated signals, leading to maturation and secretion of IL1B and IL18. Inflammasomes are supramolecular complexes that assemble in the cytosol in response to pathogens and other damage-associated signals and play critical roles in innate immunity and inflammation. Acts as a recognition receptor (PRR): recognizes and binds specific pathogens and other damage-associated signals, such as lipoteichoic acid (LTA), a cell-wall component of Gram-positive bacteria, or double stranded RNA (dsRNA). May also recognize and bind lipopolysaccharide (LPS), a major component of the outer membrane of Gram-negative bacteria; however, LPS is probably not a major activator of the NLRP6 inflammasome. Following LTA- or dsRNA-binding, NLRP6 undergoes liquid-liquid phase separation (LLPS), enhancing multivalent interactions, an essential step for the formation of the NLRP6 inflammasome polymeric complex. The NLRP6 inflammasome acts by promoting recruitment of effector pro-inflammatory caspases (CASP1 and/or CASP4) that catalyze maturation and secretion of IL1B and IL18 in the extracellular milieu. The NLRP6 inflammasome plays a central role in the maintenance of epithelial integrity and host defense against microbial infections in the intestine. Required to restrict infection against Gram-positive bacteria by recognizing lipoteichoic acid (LTA), leading to recruitment of CASP4 and CASP1, and subsequent maturation and secretion of IL1B and IL18. Involved in intestinal antiviral innate immunity together with DHX15: recognizes and binds viral dsRNA to restrict infection by enteric viruses through the interferon pathway and GSDMD-dependent release of IL18. Required to prevent infection by the apicomplexan parasite Cryptosporidium in enterocytes by promoting GSDMD-dependent release of IL18. The NLRP6 inflammasome may also regulate the gut microbiota composition by acting as a sensor of microbiota-associated metabolites to form a PYCARD/ASC-dependent inflammasome for downstream IL18 release and secretion of antimicrobial peptides. Essential for gut mucosal self-renewal and proliferation. Regulate mucus secretion in an inflammasome- and autophagy-dependent manner to prevent invasion by enteric bacteria,. During systemic bacterial infections, the NLRP6 inflammasome negatively regulates neutrophil recruitment and neutrophil extracellular traps (NETs) formation. May promote peripheral nerve recovery following injury via an inflammasome-independent mechanism. This chain is NACHT, LRR and PYD domains-containing protein 6, found in Homo sapiens (Human).